A 146-amino-acid polypeptide reads, in one-letter code: uncharacterized protein (146 aa).

Residues 1 to 137 (MLSQEFFNSF…TINVMNQIHK (137 aa)) form the HTH marR-type domain.

This is an uncharacterized protein from Staphylococcus aureus (strain MW2).